The sequence spans 434 residues: Glutamyl-tRNA reductase 2 (434 aa).

Residues 57–60 (TCNR), serine 113, 118–120 (DFE), and glutamine 124 contribute to the substrate site. The active-site Nucleophile is the cysteine 58. NADP(+) is bound at residue 193 to 198 (GTGKIG).

The protein belongs to the glutamyl-tRNA reductase family. As to quaternary structure, homodimer.

The catalysed reaction is (S)-4-amino-5-oxopentanoate + tRNA(Glu) + NADP(+) = L-glutamyl-tRNA(Glu) + NADPH + H(+). Its pathway is porphyrin-containing compound metabolism; protoporphyrin-IX biosynthesis; 5-aminolevulinate from L-glutamyl-tRNA(Glu): step 1/2. Catalyzes the NADPH-dependent reduction of glutamyl-tRNA(Glu) to glutamate 1-semialdehyde (GSA). The sequence is that of Glutamyl-tRNA reductase 2 from Flavobacterium johnsoniae (strain ATCC 17061 / DSM 2064 / JCM 8514 / BCRC 14874 / CCUG 350202 / NBRC 14942 / NCIMB 11054 / UW101) (Cytophaga johnsonae).